A 139-amino-acid polypeptide reads, in one-letter code: Acidic phospholipase A2 Ts-A4 (139 aa).

Positions 1 to 16 (MRTLWILAVLLVGVEG) are cleaved as a signal peptide. 7 disulfide bridges follow: Cys42-Cys132, Cys44-Cys60, Cys59-Cys111, Cys65-Cys139, Cys66-Cys104, Cys73-Cys97, and Cys91-Cys102. Ca(2+) is bound by residues Tyr43, Gly45, and Gly47. His63 is a catalytic residue. Position 64 (Asp64) interacts with Ca(2+). Asp105 is an active-site residue.

The cofactor is Ca(2+). In terms of tissue distribution, expressed by the venom gland.

It localises to the secreted. The enzyme catalyses a 1,2-diacyl-sn-glycero-3-phosphocholine + H2O = a 1-acyl-sn-glycero-3-phosphocholine + a fatty acid + H(+). PLA2 catalyzes the calcium-dependent hydrolysis of the 2-acyl groups in 3-sn-phosphoglycerides. The sequence is that of Acidic phospholipase A2 Ts-A4 from Trimeresurus stejnegeri (Chinese green tree viper).